The sequence spans 440 residues: C4-dicarboxylate transport protein (440 aa).

9 helical membrane passes run 15–35 (VLVAITIGILLGHYYPETGVA), 46–66 (LIKMVIAPIIFCTVVSGIAGM), 78–98 (YALLYFEIVSTIALIIGLVVV), 146–166 (AFANGDILQVLMFSVLFGFAL), 190–210 (IINMIMKLAPIGAFGAMAFTI), 224–244 (LMACFYITCLLFVLVVLGGIC), 291–311 (VVGLVIPTGYSFNLDGTSIYL), 332–352 (ITLLLVLLVASKGAAGVTGSG), and 354–374 (IVLAATLSAVGHLPVAGLALI). The interval 420-440 (GAPLVDTRPTDDLGVAEGPAR) is disordered.

The protein belongs to the dicarboxylate/amino acid:cation symporter (DAACS) (TC 2.A.23) family.

It is found in the cell inner membrane. Responsible for the transport of dicarboxylates such as succinate, fumarate, and malate from the periplasm across the membrane. In Pseudomonas putida (strain ATCC 700007 / DSM 6899 / JCM 31910 / BCRC 17059 / LMG 24140 / F1), this protein is C4-dicarboxylate transport protein.